The chain runs to 320 residues: Apolipoprotein E (320 aa).

An N-terminal signal peptide occupies residues Met-1–Gly-18. 8 repeat units span residues Ala-82–Ser-103, Pro-104–Gly-125, Ala-126–Gly-147, Gln-148–Leu-169, Arg-170–Glu-191, Arg-192–Ala-213, Thr-214–Arg-236, and Ala-237–Glu-258. The tract at residues Ala-82–Glu-258 is 8 X 22 AA approximate tandem repeats. Met-145 is modified (methionine sulfoxide). Phosphoserine is present on Ser-149. Residues His-160–Arg-170 are LDL and other lipoprotein receptors binding. Leu-164–Arg-167 lines the heparin pocket. The segment at Ala-212 to Met-293 is lipid-binding and lipoprotein association. O-linked (GalNAc...) threonine glycosylation is present at Thr-214. Gly-232–Met-239 provides a ligand contact to heparin. Residues Gln-269–His-320 are homooligomerization. A specificity for association with VLDL region spans residues Arg-281 to Met-293.

This sequence belongs to the apolipoprotein A1/A4/E family. Homotetramer. May interact with ABCA1; functionally associated with ABCA1 in the biogenesis of HDLs. May interact with APP/A4 amyloid-beta peptide; the interaction is extremely stable in vitro but its physiological significance is unclear. May interact with MAPT. May interact with MAP2. In the cerebrospinal fluid, interacts with secreted SORL1. Interacts with PMEL; this allows the loading of PMEL luminal fragment on ILVs to induce fibril nucleation. In terms of processing, APOE exists as multiple glycosylated and sialylated glycoforms within cells and in plasma. The extent of glycosylation and sialylation are tissue and context specific. Post-translationally, glycated in plasma VLDL. Phosphorylated by FAM20C in the extracellular medium.

Its subcellular location is the secreted. The protein resides in the extracellular space. It is found in the extracellular matrix. It localises to the extracellular vesicle. The protein localises to the endosome. Its subcellular location is the multivesicular body. Functionally, APOE is an apolipoprotein, a protein associating with lipid particles, that mainly functions in lipoprotein-mediated lipid transport between organs via the plasma and interstitial fluids. APOE is a core component of plasma lipoproteins and is involved in their production, conversion and clearance. Apolipoproteins are amphipathic molecules that interact both with lipids of the lipoprotein particle core and the aqueous environment of the plasma. As such, APOE associates with chylomicrons, chylomicron remnants, very low density lipoproteins (VLDL) and intermediate density lipoproteins (IDL) but shows a preferential binding to high-density lipoproteins (HDL). It also binds a wide range of cellular receptors including the LDL receptor/LDLR, the LDL receptor-related proteins LRP1, LRP2 and LRP8 and the very low-density lipoprotein receptor/VLDLR that mediate the cellular uptake of the APOE-containing lipoprotein particles. Finally, APOE also has a heparin-binding activity and binds heparan-sulfate proteoglycans on the surface of cells, a property that supports the capture and the receptor-mediated uptake of APOE-containing lipoproteins by cells. A main function of APOE is to mediate lipoprotein clearance through the uptake of chylomicrons, VLDLs, and HDLs by hepatocytes. APOE is also involved in the biosynthesis by the liver of VLDLs as well as their uptake by peripheral tissues ensuring the delivery of triglycerides and energy storage in muscle, heart and adipose tissues. By participating in the lipoprotein-mediated distribution of lipids among tissues, APOE plays a critical role in plasma and tissues lipid homeostasis. APOE is also involved in two steps of reverse cholesterol transport, the HDLs-mediated transport of cholesterol from peripheral tissues to the liver, and thereby plays an important role in cholesterol homeostasis. First, it is functionally associated with ABCA1 in the biogenesis of HDLs in tissues. Second, it is enriched in circulating HDLs and mediates their uptake by hepatocytes. APOE also plays an important role in lipid transport in the central nervous system, regulating neuron survival and sprouting. The protein is Apolipoprotein E (APOE) of Cebus capucinus (White-faced sapajou).